Here is a 179-residue protein sequence, read N- to C-terminus: ATP synthase subunit delta (179 aa).

This sequence belongs to the ATPase delta chain family. As to quaternary structure, F-type ATPases have 2 components, F(1) - the catalytic core - and F(0) - the membrane proton channel. F(1) has five subunits: alpha(3), beta(3), gamma(1), delta(1), epsilon(1). F(0) has three main subunits: a(1), b(2) and c(10-14). The alpha and beta chains form an alternating ring which encloses part of the gamma chain. F(1) is attached to F(0) by a central stalk formed by the gamma and epsilon chains, while a peripheral stalk is formed by the delta and b chains.

Its subcellular location is the cell inner membrane. F(1)F(0) ATP synthase produces ATP from ADP in the presence of a proton or sodium gradient. F-type ATPases consist of two structural domains, F(1) containing the extramembraneous catalytic core and F(0) containing the membrane proton channel, linked together by a central stalk and a peripheral stalk. During catalysis, ATP synthesis in the catalytic domain of F(1) is coupled via a rotary mechanism of the central stalk subunits to proton translocation. Its function is as follows. This protein is part of the stalk that links CF(0) to CF(1). It either transmits conformational changes from CF(0) to CF(1) or is implicated in proton conduction. This Acidithiobacillus ferrooxidans (strain ATCC 23270 / DSM 14882 / CIP 104768 / NCIMB 8455) (Ferrobacillus ferrooxidans (strain ATCC 23270)) protein is ATP synthase subunit delta.